Reading from the N-terminus, the 504-residue chain is Maturase K (504 aa).

This sequence belongs to the intron maturase 2 family. MatK subfamily.

The protein resides in the plastid. Its subcellular location is the chloroplast. Functionally, usually encoded in the trnK tRNA gene intron. Probably assists in splicing its own and other chloroplast group II introns. This is Maturase K from Alliaria petiolata (Garlic mustard).